Reading from the N-terminus, the 101-residue chain is Protein S100-A4 (101 aa).

Alanine 2 is modified (N-acetylalanine). 2 EF-hand domains span residues 12 to 47 (IVSTFHKYSGNEGDKFKLNKTELKELLTRELPSFLG) and 50 to 85 (TDEAAFQKLMNNLDSNRDNEVDFQEYCVFLSCIAMM). Positions 28 and 33 each coordinate Ca(2+). Lysine 35 carries the N6-acetyllysine modification. Residues aspartate 63, asparagine 65, aspartate 67, glutamate 69, and glutamate 74 each coordinate Ca(2+).

Belongs to the S-100 family. In terms of assembly, homodimer. Interacts with PPFIBP1 in a calcium-dependent mode. Interacts with PGLYRP1; this complex acts as a chemoattractant that promotes lymphocyte movement. Interacts with MYH9; this interaction increases cell motility. Interacts with Annexin 2/ANXA2. Interacts with TP53; this interaction promotes TP53 degradation. Interacts with CCR5 and CXCR3. Interacts with FCGR3A; this interaction inhibits PKC-dependent phosphorylation of FCGR3A.

Its subcellular location is the secreted. It localises to the nucleus. The protein resides in the cytoplasm. Functionally, calcium-binding protein that plays a role in various cellular processes including motility, angiogenesis, cell differentiation, apoptosis, and autophagy. Increases cell motility and invasiveness by interacting with non-muscle myosin heavy chain (NMMHC) IIA/MYH9. Mechanistically, promotes filament depolymerization and increases the amount of soluble myosin-IIA, resulting in the formation of stable protrusions facilitating chemotaxis. Also modulates the pro-apoptotic function of TP53 by binding to its C-terminal transactivation domain within the nucleus and reducing its protein levels. Within the extracellular space, stimulates cytokine production including granulocyte colony-stimulating factor and CCL24 from T-lymphocytes. In addition, stimulates T-lymphocyte chemotaxis by acting as a chemoattractant complex with PGLYRP1 that promotes lymphocyte migration via CCR5 and CXCR3 receptors. This chain is Protein S100-A4 (S100a4), found in Rattus norvegicus (Rat).